A 163-amino-acid chain; its full sequence is Thiol peroxidase (163 aa).

The Thioredoxin domain occupies 16–162 (LQVGDKALDF…FEAAIAAAKA (147 aa)). Catalysis depends on cysteine 58, which acts as the Cysteine sulfenic acid (-SOH) intermediate. An intrachain disulfide couples cysteine 58 to cysteine 92.

It belongs to the peroxiredoxin family. Tpx subfamily. As to quaternary structure, homodimer.

The enzyme catalyses a hydroperoxide + [thioredoxin]-dithiol = an alcohol + [thioredoxin]-disulfide + H2O. Functionally, thiol-specific peroxidase that catalyzes the reduction of hydrogen peroxide and organic hydroperoxides to water and alcohols, respectively. Plays a role in cell protection against oxidative stress by detoxifying peroxides. In Streptococcus pneumoniae serotype 2 (strain D39 / NCTC 7466), this protein is Thiol peroxidase.